Consider the following 142-residue polypeptide: Photosystem II extrinsic protein U (142 aa).

The N-terminal stretch at 1–29 (MKGLVRLLTVFSLLLGCWGWLGTTQIAQA) is a signal peptide.

This sequence belongs to the PsbU family. As to quaternary structure, PSII is composed of 1 copy each of membrane proteins PsbA, PsbB, PsbC, PsbD, PsbE, PsbF, PsbH, PsbI, PsbJ, PsbK, PsbL, PsbM, PsbT, PsbX, PsbY, PsbZ, Psb30/Ycf12, peripheral proteins PsbO, CyanoQ (PsbQ), PsbU, PsbV and a large number of cofactors. It forms dimeric complexes.

The protein resides in the cellular thylakoid membrane. In terms of biological role, one of the extrinsic, lumenal subunits of photosystem II (PSII). PSII is a light-driven water plastoquinone oxidoreductase, using light energy to abstract electrons from H(2)O, generating a proton gradient subsequently used for ATP formation. The extrinsic proteins stabilize the structure of photosystem II oxygen-evolving complex (OEC), the ion environment of oxygen evolution and protect the OEC against heat-induced inactivation. The chain is Photosystem II extrinsic protein U from Nostoc sp. (strain PCC 7120 / SAG 25.82 / UTEX 2576).